The primary structure comprises 523 residues: Melanoma-associated antigen E2 (523 aa).

MAGE domains follow at residues 88-288 and 311-502; these read LEDR…YNKA and MNDK…YREA.

The chain is Melanoma-associated antigen E2 (MAGEE2) from Homo sapiens (Human).